Consider the following 79-residue polypeptide: Serine rich endogenous peptide 2 (79 aa).

A signal peptide spans 1 to 19; sequence MANNLGLVILLLVIVLVSC. The disordered stretch occupies residues 25–79; sequence CALASPQKSRPSSEWRRKLIPVRSSRSPRSPSFAPKKPPPPPPSPPLSPSSPPSN. An SCOOP motif motif is present at residues 45–57; sequence PVRSSRSPRSPSF. The span at 45-59 shows a compositional bias: low complexity; sequence PVRSSRSPRSPSFAP. The SxS motif essential for MIK2 binding motif lies at 49–51; that stretch reads SRS. Residues 60–79 are compositionally biased toward pro residues; sequence KKPPPPPPSPPLSPSSPPSN.

It belongs to the serine rich endogenous peptide (SCOOP) phytocytokine family. In terms of assembly, interacts with MIK2 (via extracellular leucine-rich repeat domain); this interaction triggers the formation of complex between MIK2 and the BAK1/SERK3 and SERK4 coreceptors, and subsequent BAK1 activation by phosphorylation.

It is found in the cell membrane. The protein resides in the secreted. It localises to the extracellular space. Its subcellular location is the apoplast. Functionally, brassicaceae-specific phytocytokine (plant endogenous peptide released into the apoplast) perceived by MIK2 in a BAK1/SERK3 and SERK4 coreceptors-dependent manner, that modulates various physiological and antimicrobial processes including growth prevention and reactive oxygen species (ROS) response regulation. The sequence is that of Serine rich endogenous peptide 2 from Arabidopsis thaliana (Mouse-ear cress).